Consider the following 185-residue polypeptide: MLNKIYDTQKEGCEKAIASLKRDFTTLRTGKVNINILDNVMVDYYGSPTPLNQVATVLTSDASTIAITPWEKSMIKAISSAIQAANIGVNPNSDGESVKLFFPPMTVEQRQENAKHAKAMGEKAKVSIRNVRKDANDEVKKLEKDKAITEDESKKGQDEVQKITDTYTAKIDTLVKEKEAELLKI.

It belongs to the RRF family.

It localises to the cytoplasm. In terms of biological role, responsible for the release of ribosomes from messenger RNA at the termination of protein biosynthesis. May increase the efficiency of translation by recycling ribosomes from one round of translation to another. The chain is Ribosome-recycling factor from Campylobacter concisus (strain 13826).